A 93-amino-acid chain; its full sequence is Phosphoribosyl-ATP pyrophosphatase (93 aa).

The protein belongs to the PRA-PH family.

It is found in the cytoplasm. The enzyme catalyses 1-(5-phospho-beta-D-ribosyl)-ATP + H2O = 1-(5-phospho-beta-D-ribosyl)-5'-AMP + diphosphate + H(+). The protein operates within amino-acid biosynthesis; L-histidine biosynthesis; L-histidine from 5-phospho-alpha-D-ribose 1-diphosphate: step 2/9. This Mycolicibacterium gilvum (strain PYR-GCK) (Mycobacterium gilvum (strain PYR-GCK)) protein is Phosphoribosyl-ATP pyrophosphatase.